Here is a 96-residue protein sequence, read N- to C-terminus: Transcriptional regulator ATRY (96 aa).

Residues 1 to 12 form a GATA-type; atypical zinc finger; that stretch reads VICTACGQQVNQ. The ADD domain maps to 1–96; that stretch reads VICTACGQQV…IAVCDSVLEN (96 aa). The segment at 27 to 82 adopts a PHD-type; atypical zinc-finger fold; sequence LICKRWCAEGGNLICCDSCHNAFCKKCIWRNLGRKEISKIMNEKNEWHCYICCPEP.

The protein belongs to the SNF2/RAD54 helicase family. As to expression, expressed in developing and adult testis. Also weakly expressed in prostate and epididymis.

The protein resides in the nucleus. The enzyme catalyses ATP + H2O = ADP + phosphate + H(+). Its function is as follows. Could be a global transcriptional regulator. Modifies gene expression by affecting chromatin. This is Transcriptional regulator ATRY (ATRY) from Notamacropus eugenii (Tammar wallaby).